The primary structure comprises 162 residues: Peroxiredoxin-2C (162 aa).

The region spanning 4–162 (VAVGDTLPDG…SGAEEILKAL (159 aa)) is the Thioredoxin domain. Catalysis depends on C51, which acts as the Cysteine sulfenic acid (-SOH) intermediate.

This sequence belongs to the peroxiredoxin family. Prx5 subfamily. As to quaternary structure, monomer.

The protein resides in the cytoplasm. It catalyses the reaction [glutaredoxin]-dithiol + a hydroperoxide = [glutaredoxin]-disulfide + an alcohol + H2O. Its function is as follows. Reduces hydrogen peroxide and alkyl hydroperoxides with reducing equivalents provided through the thioredoxin or glutaredoxin system. May be involved in intracellular redox signaling. Thiol-specific peroxidase that catalyzes the reduction of hydrogen peroxide and organic hydroperoxides to water and alcohols, respectively. Plays a role in cell protection against oxidative stress by detoxifying peroxides. The sequence is that of Peroxiredoxin-2C (PRXIIC) from Oryza sativa subsp. japonica (Rice).